A 337-amino-acid chain; its full sequence is Ribosomal RNA small subunit methyltransferase H (337 aa).

S-adenosyl-L-methionine-binding positions include 45 to 47, Asp-64, Phe-91, Asp-120, and Gln-127; that span reads GGH.

This sequence belongs to the methyltransferase superfamily. RsmH family.

The protein localises to the cytoplasm. It catalyses the reaction cytidine(1402) in 16S rRNA + S-adenosyl-L-methionine = N(4)-methylcytidine(1402) in 16S rRNA + S-adenosyl-L-homocysteine + H(+). In terms of biological role, specifically methylates the N4 position of cytidine in position 1402 (C1402) of 16S rRNA. The polypeptide is Ribosomal RNA small subunit methyltransferase H (Corynebacterium glutamicum (strain R)).